A 162-amino-acid chain; its full sequence is MSSTELSEKDLAYLREAIKVSQQARDEGQHPFGCIIVDENDNVIMSAGNRVPDGDVTQHAETRAVGLITKTRRDLEKCTLYTSTEPCAMCSGAIFWSGIRRMIFGLSNENLIKLTQKSGECPPLYINSRDILGAASHPIEVVGPYIEDEAIIPHKGFWDGGR.

The region spanning 8–132 (EKDLAYLREA…PLYINSRDIL (125 aa)) is the CMP/dCMP-type deaminase domain. Residue His-59 coordinates Zn(2+). Glu-61 functions as the Proton donor in the catalytic mechanism. 2 residues coordinate Zn(2+): Cys-87 and Cys-90. Residue Asp-159 participates in substrate binding.

It belongs to the cytidine and deoxycytidylate deaminase family. As to quaternary structure, homodimer. It depends on Zn(2+) as a cofactor.

Its subcellular location is the cytoplasm. It is found in the nucleus. It carries out the reaction cytosine + H2O + H(+) = uracil + NH4(+). It participates in pyrimidine metabolism; UMP biosynthesis via salvage pathway; uracil from cytosine: step 1/1. Functionally, catalyzes the hydrolytic deamination of cytosine to uracil or 5-methylcytosine to thymine. Is involved in the pyrimidine salvage pathway, which allows the cell to utilize cytosine for pyrimidine nucleotide synthesis. The sequence is that of Probable cytosine deaminase from Schizosaccharomyces pombe (strain 972 / ATCC 24843) (Fission yeast).